Reading from the N-terminus, the 231-residue chain is Biosynthetic peptidoglycan transglycosylase (231 aa).

The chain crosses the membrane as a helical span at residues 7–27 (LLFWLIVVPVLLVLLLQLYFF).

The protein belongs to the glycosyltransferase 51 family.

It localises to the cell inner membrane. The catalysed reaction is [GlcNAc-(1-&gt;4)-Mur2Ac(oyl-L-Ala-gamma-D-Glu-L-Lys-D-Ala-D-Ala)](n)-di-trans,octa-cis-undecaprenyl diphosphate + beta-D-GlcNAc-(1-&gt;4)-Mur2Ac(oyl-L-Ala-gamma-D-Glu-L-Lys-D-Ala-D-Ala)-di-trans,octa-cis-undecaprenyl diphosphate = [GlcNAc-(1-&gt;4)-Mur2Ac(oyl-L-Ala-gamma-D-Glu-L-Lys-D-Ala-D-Ala)](n+1)-di-trans,octa-cis-undecaprenyl diphosphate + di-trans,octa-cis-undecaprenyl diphosphate + H(+). The protein operates within cell wall biogenesis; peptidoglycan biosynthesis. Its function is as follows. Peptidoglycan polymerase that catalyzes glycan chain elongation from lipid-linked precursors. The polypeptide is Biosynthetic peptidoglycan transglycosylase (Janthinobacterium sp. (strain Marseille) (Minibacterium massiliensis)).